Reading from the N-terminus, the 166-residue chain is uncharacterized protein (166 aa).

To C.perfringens pCP13 PCP12.

This is an uncharacterized protein from Clostridium perfringens.